Here is a 92-residue protein sequence, read N- to C-terminus: Small ribosomal subunit protein uS19 (92 aa).

It belongs to the universal ribosomal protein uS19 family.

Protein S19 forms a complex with S13 that binds strongly to the 16S ribosomal RNA. The sequence is that of Small ribosomal subunit protein uS19 from Desulfatibacillum aliphaticivorans.